The sequence spans 138 residues: Putative pre-16S rRNA nuclease (138 aa).

The protein belongs to the YqgF nuclease family.

The protein resides in the cytoplasm. In terms of biological role, could be a nuclease involved in processing of the 5'-end of pre-16S rRNA. The polypeptide is Putative pre-16S rRNA nuclease (Listeria innocua serovar 6a (strain ATCC BAA-680 / CLIP 11262)).